A 72-amino-acid polypeptide reads, in one-letter code: MKATELRNFSIEELRKKEKELRRELFNLRFQLAKGELQNVKRMKAVKKDIARILTIITEKTMMSSKGEAHKN.

The protein belongs to the universal ribosomal protein uL29 family.

This chain is Large ribosomal subunit protein uL29, found in Thermodesulfovibrio yellowstonii (strain ATCC 51303 / DSM 11347 / YP87).